The sequence spans 108 residues: Nucleoid-associated protein ACP_0492 (108 aa).

Belongs to the YbaB/EbfC family. In terms of assembly, homodimer.

The protein localises to the cytoplasm. The protein resides in the nucleoid. Binds to DNA and alters its conformation. May be involved in regulation of gene expression, nucleoid organization and DNA protection. This is Nucleoid-associated protein ACP_0492 from Acidobacterium capsulatum (strain ATCC 51196 / DSM 11244 / BCRC 80197 / JCM 7670 / NBRC 15755 / NCIMB 13165 / 161).